The chain runs to 501 residues: GMP synthase [glutamine-hydrolyzing] (501 aa).

In terms of domain architecture, Glutamine amidotransferase type-1 spans 1 to 185; the sequence is MVLVVDYGSQ…LFNVCKLEKN (185 aa). Cysteine 75 acts as the Nucleophile in catalysis. Catalysis depends on residues histidine 159 and glutamate 161. Positions 186-376 constitute a GMPS ATP-PPase domain; sequence WKIGDLVEEK…LGIPDRIINR (191 aa). 213 to 219 serves as a coordination point for ATP; that stretch reads SGGVDSS.

In terms of assembly, homodimer.

The catalysed reaction is XMP + L-glutamine + ATP + H2O = GMP + L-glutamate + AMP + diphosphate + 2 H(+). The protein operates within purine metabolism; GMP biosynthesis; GMP from XMP (L-Gln route): step 1/1. Catalyzes the synthesis of GMP from XMP. The sequence is that of GMP synthase [glutamine-hydrolyzing] (guaA) from Thermotoga maritima (strain ATCC 43589 / DSM 3109 / JCM 10099 / NBRC 100826 / MSB8).